Consider the following 104-residue polypeptide: Protein ArtA (104 aa).

The polypeptide is Protein ArtA (artA) (Escherichia coli (strain K12)).